The following is a 101-amino-acid chain: Small ribosomal subunit protein uS10 (101 aa).

This sequence belongs to the universal ribosomal protein uS10 family. Part of the 30S ribosomal subunit.

In terms of biological role, involved in the binding of tRNA to the ribosomes. The sequence is that of Small ribosomal subunit protein uS10 from Mycobacterium ulcerans (strain Agy99).